We begin with the raw amino-acid sequence, 67 residues long: Colostrum trypsin inhibitor (67 aa).

Residues 8-58 (CQLPQARGPCKAALLRYFYNSTSNACEPFTYGGCQGNNBNFETTEMCLRIC) enclose the BPTI/Kunitz inhibitor domain. Disulfide bonds link Cys-8–Cys-58, Cys-17–Cys-41, and Cys-33–Cys-54. An N-linked (GlcNAc...) asparagine glycan is attached at Asn-27.

The protein localises to the secreted. This is Colostrum trypsin inhibitor from Bos taurus (Bovine).